The sequence spans 1025 residues: RNA cytidine acetyltransferase (1025 aa).

287 to 296 (GRGKSAALGL) is an ATP binding site. K426 is modified (N6-acetyllysine). R470 contacts ATP. An N-acetyltransferase domain is found at 558-753 (CLLPPVPPTQ…HSCIMLKTLT (196 aa)). Residues 629 to 631 (IAV) and 636 to 642 (QGMGYGS) each bind acetyl-CoA. The required for localization to the nucleolus and midbody stretch occupies residues 702–1025 (PAERLDYLGV…KKDMKLKRKK (324 aa)). Residue T716 is modified to Phosphothreonine. Residue R725 coordinates acetyl-CoA. Phosphoserine occurs at positions 934, 984, and 987. Positions 990–1025 (SDKKRKLEAKQEPKQSKKLKNRETKNKKDMKLKRKK) are disordered. The span at 997–1018 (EAKQEPKQSKKLKNRETKNKKD) shows a compositional bias: basic and acidic residues.

It belongs to the RNA cytidine acetyltransferase family. NAT10 subfamily. In terms of assembly, part of the small subunit (SSU) processome, composed of more than 70 proteins and the RNA chaperone small nucleolar RNA (snoRNA) U3. Interacts with THUMPD1. Interacts with SUN1 (via N-terminus). Interacts with TERT. Acetylation at Lys-426 is required to activation of rRNA transcription. May be autoacetylated; however ability to autoacetylate in vivo requires additional evidences.

The protein resides in the nucleus. It localises to the nucleolus. The protein localises to the midbody. The enzyme catalyses a cytidine in 18S rRNA + acetyl-CoA + ATP + H2O = an N(4)-acetylcytidine in 18S rRNA + ADP + phosphate + CoA + H(+). It catalyses the reaction a cytidine in tRNA + acetyl-CoA + ATP + H2O = an N(4)-acetylcytidine in tRNA + ADP + phosphate + CoA + H(+). It carries out the reaction a cytidine in mRNA + acetyl-CoA + ATP + H2O = an N(4)-acetylcytidine in mRNA + ADP + phosphate + CoA + H(+). Its activity is regulated as follows. Specifically inhibited by remodelin (4-[2-(2-cyclopentylidenehydrazinyl)-4-thiazolyl]-benzonitrile, monohydrobromide), a hydrobromide salt molecule. Remodelin can improve nuclear architecture, chromatin organization and fitness of cells from patients suffering from Hutchinson-Gilford progeria syndrome (HGPS); molecular mechanisms explaining the relation between NAT10 activity and nuclear architecture are however unclear. RNA cytidine acetyltransferase that catalyzes the formation of N(4)-acetylcytidine (ac4C) modification on mRNAs, 18S rRNA and tRNAs. Catalyzes ac4C modification of a broad range of mRNAs, enhancing mRNA stability and translation. mRNA ac4C modification is frequently present within wobble cytidine sites and promotes translation efficiency. Mediates the formation of ac4C at position 1842 in 18S rRNA. May also catalyze the formation of ac4C at position 1337 in 18S rRNA. Required for early nucleolar cleavages of precursor rRNA at sites A0, A1 and A2 during 18S rRNA synthesis. Catalyzes the formation of ac4C in serine and leucine tRNAs. Requires the tRNA-binding adapter protein THUMPD1 for full tRNA acetyltransferase activity but not for 18S rRNA acetylation. In addition to RNA acetyltransferase activity, also able to acetylate lysine residues of proteins, such as histones, microtubules, p53/TP53 and MDM2, in vitro. The relevance of the protein lysine acetyltransferase activity is however unsure in vivo. Activates telomerase activity by stimulating the transcription of TERT, and may also regulate telomerase function by affecting the balance of telomerase subunit assembly, disassembly, and localization. Involved in the regulation of centrosome duplication by acetylating CENATAC during mitosis, promoting SASS6 proteasome degradation. Part of the small subunit (SSU) processome, first precursor of the small eukaryotic ribosomal subunit. During the assembly of the SSU processome in the nucleolus, many ribosome biogenesis factors, an RNA chaperone and ribosomal proteins associate with the nascent pre-rRNA and work in concert to generate RNA folding, modifications, rearrangements and cleavage as well as targeted degradation of pre-ribosomal RNA by the RNA exosome. The protein is RNA cytidine acetyltransferase of Homo sapiens (Human).